Here is an 84-residue protein sequence, read N- to C-terminus: uncharacterized protein (84 aa).

Residues 7-23 (AFSGVIALYGGYLYLRL) traverse the membrane as a helical segment.

The protein localises to the membrane. This is an uncharacterized protein from Haemophilus influenzae (strain ATCC 51907 / DSM 11121 / KW20 / Rd).